The primary structure comprises 563 residues: Light-independent protochlorophyllide reductase subunit B (563 aa).

Asp36 contacts [4Fe-4S] cluster. The Proton donor role is filled by Asp349. Position 484–485 (484–485 (GM)) interacts with substrate.

The protein belongs to the ChlB/BchB/BchZ family. As to quaternary structure, protochlorophyllide reductase is composed of three subunits; ChlL, ChlN and ChlB. Forms a heterotetramer of two ChlB and two ChlN subunits. The cofactor is [4Fe-4S] cluster.

It is found in the plastid. The protein localises to the chloroplast. The catalysed reaction is chlorophyllide a + oxidized 2[4Fe-4S]-[ferredoxin] + 2 ADP + 2 phosphate = protochlorophyllide a + reduced 2[4Fe-4S]-[ferredoxin] + 2 ATP + 2 H2O. It functions in the pathway porphyrin-containing compound metabolism; chlorophyll biosynthesis (light-independent). Functionally, component of the dark-operative protochlorophyllide reductase (DPOR) that uses Mg-ATP and reduced ferredoxin to reduce ring D of protochlorophyllide (Pchlide) to form chlorophyllide a (Chlide). This reaction is light-independent. The NB-protein (ChlN-ChlB) is the catalytic component of the complex. The protein is Light-independent protochlorophyllide reductase subunit B of Chlamydomonas moewusii (Chlamydomonas eugametos).